A 513-amino-acid polypeptide reads, in one-letter code: Histidine ammonia-lyase (513 aa).

Residues 142-144 (ASG) constitute a cross-link (5-imidazolinone (Ala-Gly)). Ser143 is modified (2,3-didehydroalanine (Ser)).

It belongs to the PAL/histidase family. Post-translationally, contains an active site 4-methylidene-imidazol-5-one (MIO), which is formed autocatalytically by cyclization and dehydration of residues Ala-Ser-Gly.

It localises to the cytoplasm. The enzyme catalyses L-histidine = trans-urocanate + NH4(+). The protein operates within amino-acid degradation; L-histidine degradation into L-glutamate; N-formimidoyl-L-glutamate from L-histidine: step 1/3. This is Histidine ammonia-lyase from Roseobacter denitrificans (strain ATCC 33942 / OCh 114) (Erythrobacter sp. (strain OCh 114)).